The sequence spans 348 residues: Phosphate acyltransferase (348 aa).

Belongs to the PlsX family. As to quaternary structure, homodimer. Probably interacts with PlsY.

It localises to the cytoplasm. It catalyses the reaction a fatty acyl-[ACP] + phosphate = an acyl phosphate + holo-[ACP]. It participates in lipid metabolism; phospholipid metabolism. Its function is as follows. Catalyzes the reversible formation of acyl-phosphate (acyl-PO(4)) from acyl-[acyl-carrier-protein] (acyl-ACP). This enzyme utilizes acyl-ACP as fatty acyl donor, but not acyl-CoA. This chain is Phosphate acyltransferase, found in Rhizobium rhizogenes (strain K84 / ATCC BAA-868) (Agrobacterium radiobacter).